The chain runs to 197 residues: dTTP/UTP pyrophosphatase (197 aa).

Asp-69 acts as the Proton acceptor in catalysis.

Belongs to the Maf family. YhdE subfamily. A divalent metal cation is required as a cofactor.

The protein resides in the cytoplasm. The catalysed reaction is dTTP + H2O = dTMP + diphosphate + H(+). It carries out the reaction UTP + H2O = UMP + diphosphate + H(+). Functionally, nucleoside triphosphate pyrophosphatase that hydrolyzes dTTP and UTP. May have a dual role in cell division arrest and in preventing the incorporation of modified nucleotides into cellular nucleic acids. This is dTTP/UTP pyrophosphatase from Lachnoclostridium phytofermentans (strain ATCC 700394 / DSM 18823 / ISDg) (Clostridium phytofermentans).